A 212-amino-acid polypeptide reads, in one-letter code: uncharacterized protein (212 aa).

A helical membrane pass occupies residues 186–206; it reads VITLISFMLFSILFFLIFLIV.

Its subcellular location is the membrane. This is an uncharacterized protein from Mycoplasma genitalium (strain ATCC 33530 / DSM 19775 / NCTC 10195 / G37) (Mycoplasmoides genitalium).